Reading from the N-terminus, the 99-residue chain is Putative protein YgeP (99 aa).

This chain is Putative protein YgeP (ygeP), found in Escherichia coli (strain K12).